The sequence spans 81 residues: MKTLLLTLVVVTIVCLDLGYTRKCNKLVPLFYKTCPAGKNLCYKMFMVSNLTVPVKRGCIDVCPKNSALVKYVCCNTDRCN.

The signal sequence occupies residues 1 to 21 (MKTLLLTLVVVTIVCLDLGYT). 4 disulfide bridges follow: cysteine 24-cysteine 42, cysteine 35-cysteine 59, cysteine 63-cysteine 74, and cysteine 75-cysteine 80.

The protein belongs to the three-finger toxin family. Short-chain subfamily. Type IA cytotoxin sub-subfamily. Monomer in solution; Homodimer and oligomer in the presence of negatively charged lipids forming a pore with a size ranging between 20 and 30 Angstroms. Expressed by the venom gland.

The protein localises to the secreted. It is found in the target cell membrane. In terms of biological role, basic protein that bind to cell membrane and depolarizes cardiomyocytes. This cytotoxin also shows lytic activities, but 2-fold more important than that of CTX-A2. It binds to the integrin alpha-V/beta-3 with a moderate affinity. Inhibits protein kinase C. It may interact with sulfatides in the cell membrane, which induces pore formation and cell internalization and is responsible for cytotoxicity in cardiomyocytes. It may also target the mitochondrial membrane and induces mitochondrial swelling and fragmentation. The sequence is that of Cytotoxin 4 from Naja atra (Chinese cobra).